The chain runs to 575 residues: Sodium/hydrogen exchanger 8 (575 aa).

Helical transmembrane passes span 54 to 74 (MTIFFSLLVLAICIILVHLLI), 78 to 98 (LHFLPESVAVVSLGILMGAVI), 117 to 137 (PNMFFLLLLPPIIFESGYSLH), 150 to 170 (LFAVFGTAISAFVVGGGIYFL), 185 to 205 (FAFGSLISAVDPVATIAIFNA), 255 to 275 (LGYFLKMFFGSAALGTLTGLI), 305 to 325 (GLAEGISLSGIMAILFSGIVM), 348 to 368 (VAFLCETCVFAFLGLSIFSFP), 373 to 393 (ISFVIWCIVLVLFGRAVNIFP), 411 to 431 (MFIMWFSGLRGAIPYALSLHL), and 445 to 465 (TTIIIVLFTILLLGGSTMPLI). The residue at position 504 (Thr504) is a Phosphothreonine. Phosphoserine occurs at positions 565 and 567.

This sequence belongs to the monovalent cation:proton antiporter 1 (CPA1) transporter (TC 2.A.36) family. In terms of tissue distribution, intestine and kidneys.

It is found in the golgi apparatus membrane. The protein resides in the golgi apparatus. It localises to the trans-Golgi network membrane. Its subcellular location is the endosome. The protein localises to the multivesicular body membrane. It is found in the apical cell membrane. The protein resides in the cytoplasmic vesicle. It localises to the secretory vesicle. Its subcellular location is the acrosome. The enzyme catalyses Na(+)(in) + H(+)(out) = Na(+)(out) + H(+)(in). Expression and activity are regulated by acid media by increasing the rate of trafficking to the apical membrane. Inhibited by HOE694 and S3226. Functionally, na(+)/H(+) antiporter. Mediates the electoneutral exchange of intracellular H(+) ions for extracellular Na(+) in 1:1 stoichiometry. Acts as an Na(+)/H(+) exchanger in the trans-Golgi. Contributes to the regulation of pH regulation of Golgi apparatus, and consequently, in protein trafficking and endosomal morphology. In germ cells, plays a crucial role in acrosome biogenesis and sperm development, probably by playing a role in the fusion of the Golgi-derived vesicles that form the acrosomal cap. Can also be active at the cell surface of specialized cells. In the small intestine, at the cell membrane, plays a major physiological role in transepithelial absorption of Na(+) and regulates intracellular pH homeostasis of intestinal epithelial cells. Acts as an important regulator of mucosal integrity in the intestine and in the stomach, could mediate the pH fluctuation necessary for mucin exocytosis or assist membrane trafficking of other proteins. Plays a role in photoreceptor survival and in the maintenance of intracellular pH homeostasis in retinal pigment epithelium (RPE cells). This chain is Sodium/hydrogen exchanger 8 (Slc9a8), found in Rattus norvegicus (Rat).